The following is a 732-amino-acid chain: Probable ATP-dependent RNA helicase DHX35 homolog (732 aa).

The interval 1–50 (MSYHPGHGHRQEPRKGAGARRGFARPDDSADAPRTGPLIFEERSTENAGA) is disordered. Residues 87–251 (LYMCERYRTI…FEMNETGNSD (165 aa)) form the Helicase ATP-binding domain. 100–107 (GETGCGKS) lines the ATP pocket. Positions 198–201 (DEAH) match the DEAH box motif. The 175-residue stretch at 283–457 (AVDTVINIHK…STILQLKALG (175 aa)) folds into the Helicase C-terminal domain.

Belongs to the DEAD box helicase family. DEAH subfamily.

The catalysed reaction is ATP + H2O = ADP + phosphate + H(+). This Caenorhabditis elegans protein is Probable ATP-dependent RNA helicase DHX35 homolog.